Reading from the N-terminus, the 399-residue chain is Bombesin receptor subtype-3 (399 aa).

Positions 1–31 (MSQRQPQSPNQTLISTTNDTESSSSVVPNDS) are enriched in polar residues. A disordered region spans residues 1 to 38 (MSQRQPQSPNQTLISTTNDTESSSSVVPNDSTNKRRTG). Residues 1–41 (MSQRQPQSPNQTLISTTNDTESSSSVVPNDSTNKRRTGDNS) are Extracellular-facing. N-linked (GlcNAc...) asparagine glycans are attached at residues asparagine 10, asparagine 18, and asparagine 29. Residues 42–63 (PGIEALCAIYITYAVIISVGIL) traverse the membrane as a helical segment. The Cytoplasmic segment spans residues 64–82 (GNAILIKVFFKTKSMQTVP). A helical transmembrane segment spans residues 83–103 (NIFITSLAFGDLLLLLTCVPV). Residues 104 to 121 (DVTHYLAEGWLFGRIGCK) are Extracellular-facing. Residues cysteine 120 and cysteine 203 are joined by a disulfide bond. Residues 122–143 (VLSFIRLTSVGVSVFTLTILSA) form a helical membrane-spanning segment. Topologically, residues 144 to 163 (DRYKAVVKPLERQPPNAILK) are cytoplasmic. The chain crosses the membrane as a helical span at residues 164 to 184 (TCAKAGCIWIMSMIIALPEAI). The Extracellular segment spans residues 185–220 (FSNVYTFQDPDKNVTFKACASYPVSERLLQEIHSLL). The chain crosses the membrane as a helical span at residues 221–241 (CFLVFYIIPLSIISVYYSLIA). Residues 242 to 272 (RTLYKSTLNIPTEEQRHARKQIESRKRIAKT) lie on the Cytoplasmic side of the membrane. A helical membrane pass occupies residues 273-293 (VLVLVALFALCWLPNHLLYLY). Over 294 to 313 (RSFTSQTYMDSSTVHLFVTI) the chain is Extracellular. The chain crosses the membrane as a helical span at residues 314–333 (ISRILAFSNSCVNPFALYWL). The Cytoplasmic segment spans residues 334 to 399 (SNTFQQHFKA…CSVKKEDDRV (66 aa)).

Belongs to the G-protein coupled receptor 1 family. As to quaternary structure, interacts with C6orf89.

The protein localises to the cell membrane. Functionally, role in sperm cell division, maturation, or function. This receptor mediates its action by association with G proteins that activate a phosphatidylinositol-calcium second messenger system. This chain is Bombesin receptor subtype-3 (BRS3), found in Ovis aries (Sheep).